A 215-amino-acid polypeptide reads, in one-letter code: Ribose-5-phosphate isomerase A (215 aa).

Substrate contacts are provided by residues 26-29 (TGST), 79-82 (DGAD), and 92-95 (KGGG). Glu-101 acts as the Proton acceptor in catalysis. Residue Lys-119 coordinates substrate.

Belongs to the ribose 5-phosphate isomerase family. Homodimer.

It carries out the reaction aldehydo-D-ribose 5-phosphate = D-ribulose 5-phosphate. Its pathway is carbohydrate degradation; pentose phosphate pathway; D-ribose 5-phosphate from D-ribulose 5-phosphate (non-oxidative stage): step 1/1. Its function is as follows. Catalyzes the reversible conversion of ribose-5-phosphate to ribulose 5-phosphate. The protein is Ribose-5-phosphate isomerase A of Xanthomonas oryzae pv. oryzae (strain MAFF 311018).